The following is a 426-amino-acid chain: Cytochrome c biogenesis protein Ccs1 (426 aa).

Helical transmembrane passes span 11 to 31, 70 to 90, and 153 to 173; these read LKFAIALLLLISITITFGSII, NFWFISLLLSLGISLIACTFF, and IAPVFVHLSIILILLGSIFAS.

It belongs to the Ccs1/CcsB family. In terms of assembly, may interact with CcsA.

The protein resides in the plastid. Its subcellular location is the chloroplast thylakoid membrane. Required during biogenesis of c-type cytochromes (cytochrome c6 and cytochrome f) at the step of heme attachment. The protein is Cytochrome c biogenesis protein Ccs1 of Heterosigma akashiwo (strain CCMP452 / OLISTH).